Reading from the N-terminus, the 498-residue chain is Glycylpeptide N-tetradecanoyltransferase 2 (498 aa).

The segment at 1-88 (MAEDSESAAS…QPSKNPSVPM (88 aa)) is disordered. Positions 15 to 32 (ELDDQDTCGIDGDNEEET) are enriched in acidic residues. Residue S38 is modified to Phosphoserine. Basic residues predominate over residues 45–57 (AKKKKKKQKRKKE). Over residues 61–86 (SGGTKSDSASDSQEIKIQQPSKNPSV) the composition is skewed to polar residues. 8 residues coordinate tetradecanoyl-CoA: H117, W122, L250, V252, S258, R260, V261, and A262.

It belongs to the NMT family.

It localises to the cytoplasm. It is found in the membrane. The catalysed reaction is N-terminal glycyl-[protein] + tetradecanoyl-CoA = N-tetradecanoylglycyl-[protein] + CoA + H(+). It catalyses the reaction N-terminal glycyl-L-lysyl-[protein] + tetradecanoyl-CoA = N-terminal glycyl-(N(6)-tetradecanoyl)-L-lysyl-[protein] + CoA + H(+). Its function is as follows. Adds a myristoyl group to the N-terminal glycine residue of certain cellular and viral proteins. Also able to mediate N-terminal lysine myristoylation of proteins: catalyzes myristoylation of ARF6 on both 'Gly-2' and 'Lys-3'. Lysine myristoylation is required to maintain ARF6 on membranes during the GTPase cycle. The polypeptide is Glycylpeptide N-tetradecanoyltransferase 2 (Homo sapiens (Human)).